Reading from the N-terminus, the 365-residue chain is Spermine synthase (365 aa).

An N-acetylalanine modification is found at Ala-2. Ser-57 bears the Phosphoserine mark. Residues 121-361 (RYWPTADGRL…ELWVFYTVWK (241 aa)) enclose the PABS domain. Gln-147 serves as a coordination point for S-adenosyl 3-(methylsulfanyl)propylamine. Spermidine contacts are provided by Tyr-176 and Asp-200. Residues Glu-219 and 254 to 255 (DC) contribute to the S-adenosyl 3-(methylsulfanyl)propylamine site. Asp-275 acts as the Proton acceptor in catalysis. Positions 350 and 352 each coordinate spermidine.

This sequence belongs to the spermidine/spermine synthase family. As to quaternary structure, homodimer. Dimerization is mediated through the N-terminal domain and seems to be required for activity as deletion of the N-terminal domain causes complete loss of activity.

The catalysed reaction is S-adenosyl 3-(methylsulfanyl)propylamine + spermidine = spermine + S-methyl-5'-thioadenosine + H(+). It participates in amine and polyamine biosynthesis; spermine biosynthesis; spermine from spermidine: step 1/1. Functionally, catalyzes the production of spermine from spermidine and decarboxylated S-adenosylmethionine (dcSAM). In Bos taurus (Bovine), this protein is Spermine synthase (SMS).